The following is a 190-amino-acid chain: dTTP/UTP pyrophosphatase (190 aa).

Asp71 serves as the catalytic Proton acceptor.

It belongs to the Maf family. YhdE subfamily. Requires a divalent metal cation as cofactor.

It localises to the cytoplasm. The catalysed reaction is dTTP + H2O = dTMP + diphosphate + H(+). The enzyme catalyses UTP + H2O = UMP + diphosphate + H(+). Its function is as follows. Nucleoside triphosphate pyrophosphatase that hydrolyzes dTTP and UTP. May have a dual role in cell division arrest and in preventing the incorporation of modified nucleotides into cellular nucleic acids. The polypeptide is dTTP/UTP pyrophosphatase (Xanthomonas axonopodis pv. citri (strain 306)).